The primary structure comprises 504 residues: Trifunctional (S)-stylopine synthase/(S)-nandinine synthase/(S)-canadine synthase (504 aa).

A helical membrane pass occupies residues 16 to 36 (SSTTTTTTILLSLLFTIFIIL). A heme-binding site is contributed by C448.

Belongs to the cytochrome P450 family. Requires heme as cofactor. As to expression, expressed in roots and at lower levels in stems, leaves and plantlets.

Its subcellular location is the endoplasmic reticulum membrane. It catalyses the reaction (S)-cheilanthifoline + reduced [NADPH--hemoprotein reductase] + O2 = (S)-stylopine + oxidized [NADPH--hemoprotein reductase] + 2 H2O + H(+). It carries out the reaction (S)-tetrahydrocolumbamine + reduced [NADPH--hemoprotein reductase] + O2 = (S)-canadine + oxidized [NADPH--hemoprotein reductase] + 2 H2O + H(+). The catalysed reaction is (S)-scoulerine + reduced [NADPH--hemoprotein reductase] + O2 = (S)-nandinine + oxidized [NADPH--hemoprotein reductase] + 2 H2O + H(+). Functionally, methylenedioxy bridge-forming cytochrome P450 involved in the biosynthesis of isoquinoline alkaloids. Converts (S)-cheilanthifoline to (S)-stylopine, (S)-scoulerine to (S)-nandinine and (S)-tetrahydrocolumbamine to (S)-canadine. Can be involved in both sanguinarine and berberine biosynthesis. Catalyzes an oxidative reaction that does not incorporate oxygen into the product. This Argemone mexicana (Mexican prickly poppy) protein is Trifunctional (S)-stylopine synthase/(S)-nandinine synthase/(S)-canadine synthase.